Reading from the N-terminus, the 379-residue chain is Glucose-1-phosphate adenylyltransferase (379 aa).

Residues Gly-164, 179–180 (EK), and Ser-190 contribute to the alpha-D-glucose 1-phosphate site.

It belongs to the bacterial/plant glucose-1-phosphate adenylyltransferase family. Homotetramer.

It catalyses the reaction alpha-D-glucose 1-phosphate + ATP + H(+) = ADP-alpha-D-glucose + diphosphate. It participates in glycan biosynthesis; glycogen biosynthesis. Its function is as follows. Involved in the biosynthesis of ADP-glucose, a building block required for the elongation reactions to produce glycogen. Catalyzes the reaction between ATP and alpha-D-glucose 1-phosphate (G1P) to produce pyrophosphate and ADP-Glc. This Streptococcus equi subsp. zooepidemicus (strain H70) protein is Glucose-1-phosphate adenylyltransferase.